The primary structure comprises 289 residues: MRQIAFYGKGGIGKSTTQQNTMAAMAEMGRRVMIVGCDPKADSTRLILHSKAQTSVIQLAAEKGSVEDLELDEVLVEGQWGIKCVESGGPEPGVGCAGRGVITSITYLEEAGAYENLDFVTYDVLGDVVCGGFAMPIRQGKAQEIYIVTSGEMMAMYAANNIARGVLKYAHSGGVRLGGLICNSRNTDREDELIIELARRLNTQMIHFIPRNNVVQHAELRRMTVIEYDPENSQANEYRQLAKKIDENDMKTIPTPISMDELEELLIEFGIMEQEDESIIGQKANATVA.

8–15 (GKGGIGKS) contributes to the ATP binding site. Position 96 (Cys-96) interacts with [4Fe-4S] cluster. Arg-99 is modified (ADP-ribosylarginine; by dinitrogenase reductase ADP-ribosyltransferase). Cys-130 lines the [4Fe-4S] cluster pocket.

Belongs to the NifH/BchL/ChlL family. As to quaternary structure, homodimer. The cofactor is [4Fe-4S] cluster. Post-translationally, the reversible ADP-ribosylation of Arg-99 inactivates the nitrogenase reductase and regulates nitrogenase activity.

The enzyme catalyses N2 + 8 reduced [2Fe-2S]-[ferredoxin] + 16 ATP + 16 H2O = H2 + 8 oxidized [2Fe-2S]-[ferredoxin] + 2 NH4(+) + 16 ADP + 16 phosphate + 6 H(+). The key enzymatic reactions in nitrogen fixation are catalyzed by the nitrogenase complex, which has 2 components: the iron protein and the molybdenum-iron protein. The polypeptide is Nitrogenase iron protein (Parafrankia sp. (strain EAN1pec)).